The sequence spans 580 residues: MKECPYGEKCYRKNPIHFGEFSHAHLDAIYAKGNESGDYEIPANYSSEMIHTQLKLLEKLFPKQATNKEQEAHSSSSKPAVTAPVASGSSSSGSLDTNPSGSSASGPAASQDTSNLAKKQKLNAKNIRDYIPVVIEKGGMAKKLERAAPYNMFLTAITDSKPTHSEPLSITLQEILDESLGEIESTVQINFMVDIGWLLGHYYFAGILDKPLLLLYGDESPELLSIGKFKQQVTAIRVKMPTPFATSHTKMMFLGYSDGSMRVVISTANLYEDDWHNRTQGLWISPKLPALPVDADTGAGESLTGFKQDLMLYLVEYKISQLQPWIARIRNSDFSAINVFFLGSVPGGHREGSVRGHPWGHARLASLLAKHAAPIDDRIPVVCQSSSIGSLGANVQAWIQQDFVNSLKKDSTPVGKLRQMPPFKMIYPSYGNVAGSHDGMLGGGCLPYGKNTNDKQPWLKDYLQQWKSSDRFRSRAMPHIKSYTRFNLEDQSVYWFVLTSANLSKAAWGCFNKNSNIQPCLRIANYEAGVLFLPRFVTGEDTFPLGNNRDGVPAFPLPYDVPLTPYAPDDKPFLMDYLQG.

The tract at residues 65 to 117 (ATNKEQEAHSSSSKPAVTAPVASGSSSSGSLDTNPSGSSASGPAASQDTSNLA) is disordered. Low complexity predominate over residues 87 to 110 (SGSSSSGSLDTNPSGSSASGPAAS). Residue H248 is the Nucleophile of the active site. Residue K250 participates in substrate binding. Residues 387–390 (SIGS) are interaction with DNA. H479 (proton donor/acceptor) is an active-site residue. A substrate-binding site is contributed by K481.

This sequence belongs to the tyrosyl-DNA phosphodiesterase family. As to expression, expressed in the body and at higher levels in the head. Expressed in the delaminating neuroblasts and a few ganglion mother cells in stage 11-14 embryonic central nervous system. Weak expression is seen in gonads at stage 16. Expressed in the brain; expression is regulated by DIP2.

It is found in the nucleus. Its subcellular location is the cytoplasm. In terms of biological role, DNA repair enzyme that can remove a variety of covalent adducts from DNA through hydrolysis of a 3'-phosphodiester bond, giving rise to DNA with a free 3' phosphate. Catalyzes the hydrolysis of dead-end complexes between DNA and the topoisomerase I active site tyrosine residue. Hydrolyzes 3'-phosphoglycolates on protruding 3' ends on DNA double-strand breaks due to DNA damage by radiation and free radicals. Acts on blunt-ended double-strand DNA breaks and on single-stranded DNA. May have low 3'exonuclease activity and may be able to remove a single nucleoside from the 3'end of DNA and RNA molecules with 3'hydroxyl groups. Has no exonuclease activity towards DNA or RNA with a 3'phosphate. Required for normal polarization of epidermal cells, correct subcellular location of the Crb complex to the apical lateral membrane, and for normal neuronal development during embryonic development. Contributes to maintenance of epithelial cells in response to topoisomerase-1-mediated and oxidative DNA damage. Required for precise axonal bifurcation in mushroom body neurons. Required for maintenance of normal neuronal function. The chain is Tyrosyl-DNA phosphodiesterase 1 from Drosophila melanogaster (Fruit fly).